Consider the following 203-residue polypeptide: Putative 3-methyladenine DNA glycosylase (203 aa).

This sequence belongs to the DNA glycosylase MPG family.

This is Putative 3-methyladenine DNA glycosylase from Clostridium botulinum (strain ATCC 19397 / Type A).